A 370-amino-acid chain; its full sequence is Metalloproteinase (370 aa).

An N-terminal signal peptide occupies residues 1–15 (MYLAYIFFLFATVSA). In terms of domain architecture, Peptidase M12B spans 170–370 (IVIEVLLVTD…DNYGKIFRMF (201 aa)). Asn226 carries an N-linked (GalNAc...) asparagine glycan. Position 320 (His320) interacts with Zn(2+). Glu321 is an active-site residue. Positions 324 and 330 each coordinate Zn(2+).

It belongs to the venom metalloproteinase (M12B) family. In terms of tissue distribution, expressed by the venom gland.

The protein localises to the secreted. Functionally, metalloprotease that may disrupt the cell matrix and the process of clotting blood or hemolymph. This Tityus obscurus (Amazonian scorpion) protein is Metalloproteinase.